A 147-amino-acid chain; its full sequence is MAAAALTSQLNALVNNMFAMGLLDDQFQQLQMLQDSTAPDFVSEVVTLFCDDGERIICELSRQLEKPNVDFDRVDSYVHQLKGSSASVGAQKVKNTCIQFREFCQQRSRDGCLKTLDLVRTEFYDLRNKFQAMLQLEQQIQACYPKH.

Positions 38 to 133 (APDFVSEVVT…YDLRNKFQAM (96 aa)) constitute an HPt domain. His79 bears the Phosphohistidine mark.

Two-component system major event consists of a His-to-Asp phosphorelay between a sensor histidine kinase (HK) and a response regulator (RR). In plants, the His-to-Asp phosphorelay involves an additional intermediate named Histidine-containing phosphotransfer protein (HPt). This multistep phosphorelay consists of a His-Asp-His-Asp sequential transfer of a phosphate group between first a His and an Asp of the HK protein, followed by the transfer to a conserved His of the HPt protein and finally the transfer to an Asp in the receiver domain of the RR protein. Widely expressed.

It is found in the cytoplasm. Its subcellular location is the cytosol. The protein localises to the nucleus. Functionally, functions as a two-component phosphorelay mediators between cytokinin sensor histidine kinases and response regulators (B-type ARRs). Plays an important role in propagating cytokinin signal transduction through the multistep His-to-Asp phosphorelay. Functions as a positive regulator of the cytokinin signaling pathway. May play a regulatory role in salt and drought tolerance during plant development. This Oryza sativa subsp. japonica (Rice) protein is Histidine-containing phosphotransfer protein 1.